Reading from the N-terminus, the 283-residue chain is Pantothenate synthetase (283 aa).

30–37 (MGNLHDAH) lines the ATP pocket. Histidine 37 acts as the Proton donor in catalysis. Glutamine 61 is a binding site for (R)-pantoate. Glutamine 61 serves as a coordination point for beta-alanine. 149-152 (GVKD) contacts ATP. A (R)-pantoate-binding site is contributed by glutamine 155. Residues valine 178 and 186-189 (MSSR) contribute to the ATP site.

It belongs to the pantothenate synthetase family. Homodimer.

The protein resides in the cytoplasm. It catalyses the reaction (R)-pantoate + beta-alanine + ATP = (R)-pantothenate + AMP + diphosphate + H(+). It functions in the pathway cofactor biosynthesis; (R)-pantothenate biosynthesis; (R)-pantothenate from (R)-pantoate and beta-alanine: step 1/1. In terms of biological role, catalyzes the condensation of pantoate with beta-alanine in an ATP-dependent reaction via a pantoyl-adenylate intermediate. This is Pantothenate synthetase from Cellvibrio japonicus (strain Ueda107) (Pseudomonas fluorescens subsp. cellulosa).